The following is a 549-amino-acid chain: Mitochondrial hydroperoxide bicyclase CYP50918A1 (549 aa).

Residues 1–75 (MPDAFDVSDD…PQGNRKPAVL (75 aa)) form a disordered region. The segment covering 8–26 (SDDKQLVDQQLTRDSDSKP) has biased composition (basic and acidic residues). The segment covering 27–41 (AAKPASKQKPPSKVP) has biased composition (low complexity). Cys491 contacts heme. Residues 528 to 549 (DTGDHGPPNGKFSVIKPRQPKH) are disordered.

Belongs to the cytochrome P450 family. It depends on heme as a cofactor.

It is found in the mitochondrion. The catalysed reaction is (13S)-hydroperoxy-(9Z,11E,15Z)-octadecatrienoate = plasmodiophorol A. The enzyme catalyses (13S)-hydroperoxy-(9Z,11E,15Z)-octadecatrienoate = plasmodiophorol B. It functions in the pathway lipid metabolism; oxylipin biosynthesis. Cytochrome P450 hydroperoxide bicyclase involved in the metabolism of oxylipins natural products such as egregiachlorides, hybridalactone, ecklonialactones and related bicyclic oxylipins. Isomerizes the hydroperoxides into epoxyalcohols via epoxyallylic radical. Can use alpha-linolenic 13-hydroperoxide ((9Z,11E,13S,15Z)-13-hydroperoxy-9,11,15-octadecatrienoic, 13-HPOT) as preferred substrate to produce the heterobicyclic oxylipins plasmodiophorol A (6-oxabicyclo[3.1.0]hexane) and plasmodiophorol B (2-oxabicyclo[2.2.1]heptane) at the ratio 12:1 and a minor product plasmodiophorol C (cyclopentanediol) formed through the hydrolysis of plasmodiophorols A and B and, to a lower extent, active with linoleic acid 13-hydroperoxide ((9Z,11E,13S)-13-hydroperoxy-9,11-octadecadienoic, 13-HPOD), linoleic acid 9-hydroperoxide ((9S,10E,12Z)-9-hydroperoxy-10,12-octadecadienoic, 9-HPOD) and alpha-linolenic 9-hydroperoxide ((9S,10E,12Z,15Z)-9-hydroperoxy-10,12,15-octadecatrienoic, 9-HPOT). This chain is Mitochondrial hydroperoxide bicyclase CYP50918A1, found in Plasmodiophora brassicae (Clubroot disease agent).